An 88-amino-acid chain; its full sequence is Small ribosomal subunit protein uS15 (88 aa).

This sequence belongs to the universal ribosomal protein uS15 family. Part of the 30S ribosomal subunit. Forms a bridge to the 50S subunit in the 70S ribosome, contacting the 23S rRNA.

Its function is as follows. One of the primary rRNA binding proteins, it binds directly to 16S rRNA where it helps nucleate assembly of the platform of the 30S subunit by binding and bridging several RNA helices of the 16S rRNA. Functionally, forms an intersubunit bridge (bridge B4) with the 23S rRNA of the 50S subunit in the ribosome. This Polaromonas sp. (strain JS666 / ATCC BAA-500) protein is Small ribosomal subunit protein uS15.